A 151-amino-acid polypeptide reads, in one-letter code: uncharacterized protein (151 aa).

Residues 6-143 form the Nudix hydrolase domain; that stretch reads MKTLSAGIIF…QWQYVMGPSL (138 aa).

This is an uncharacterized protein from Escherichia coli (Bacteriophage T4).